The sequence spans 261 residues: tRNA pseudouridine synthase A (261 aa).

The active-site Nucleophile is the aspartate 51. Residue tyrosine 109 coordinates substrate.

The protein belongs to the tRNA pseudouridine synthase TruA family. In terms of assembly, homodimer.

It catalyses the reaction uridine(38/39/40) in tRNA = pseudouridine(38/39/40) in tRNA. In terms of biological role, formation of pseudouridine at positions 38, 39 and 40 in the anticodon stem and loop of transfer RNAs. The chain is tRNA pseudouridine synthase A from Shewanella baltica (strain OS223).